We begin with the raw amino-acid sequence, 457 residues long: ATP synthase subunit beta (457 aa).

147–154 (GGAGVGKT) provides a ligand contact to ATP.

The protein belongs to the ATPase alpha/beta chains family. In terms of assembly, F-type ATPases have 2 components, CF(1) - the catalytic core - and CF(0) - the membrane proton channel. CF(1) has five subunits: alpha(3), beta(3), gamma(1), delta(1), epsilon(1). CF(0) has three main subunits: a(1), b(2) and c(9-12). The alpha and beta chains form an alternating ring which encloses part of the gamma chain. CF(1) is attached to CF(0) by a central stalk formed by the gamma and epsilon chains, while a peripheral stalk is formed by the delta and b chains.

The protein localises to the cell inner membrane. It carries out the reaction ATP + H2O + 4 H(+)(in) = ADP + phosphate + 5 H(+)(out). Produces ATP from ADP in the presence of a proton gradient across the membrane. The catalytic sites are hosted primarily by the beta subunits. This is ATP synthase subunit beta from Histophilus somni (strain 2336) (Haemophilus somnus).